The following is a 248-amino-acid chain: ATP synthase subunit a, chloroplastic (248 aa).

5 helical membrane-spanning segments follow: residues 35–55, 94–114, 133–153, 202–222, and 224–244; these read GQVF…SFLG, VPYI…GALI, INTT…AGLS, VFTL…GLFA, and SIQA…AMEG.

This sequence belongs to the ATPase A chain family. F-type ATPases have 2 components, CF(1) - the catalytic core - and CF(0) - the membrane proton channel. CF(1) has five subunits: alpha(3), beta(3), gamma(1), delta(1), epsilon(1). CF(0) has four main subunits: a, b, b' and c.

Its subcellular location is the plastid. It is found in the chloroplast thylakoid membrane. Its function is as follows. Key component of the proton channel; it plays a direct role in the translocation of protons across the membrane. This chain is ATP synthase subunit a, chloroplastic, found in Porphyra purpurea (Red seaweed).